The following is a 567-amino-acid chain: R-linalool synthase QH1, chloroplastic (567 aa).

The N-terminal 24 residues, 1–24, are a transit peptide targeting the chloroplast; the sequence is GNAYMRIYSTKTTRITANATVNAA. Arg-282, Asp-319, Asp-323, Arg-460, and Asp-463 together coordinate (2E)-geranyl diphosphate. Positions 319 and 323 each coordinate Mg(2+). Residues 319–323 carry the DDXXD motif motif; it reads DDVYD. Mg(2+)-binding residues include Asp-463, Thr-467, and Glu-471.

Belongs to the terpene synthase family. Tpsb subfamily. Requires Mg(2+) as cofactor. In terms of tissue distribution, highly expressed in leaves and lower levels in inflorescences. Not detected in stems, stem epidermis, stem stele or roots.

Its subcellular location is the plastid. It localises to the chloroplast. It carries out the reaction (2E)-geranyl diphosphate + H2O = (R)-linalool + diphosphate. Its pathway is secondary metabolite biosynthesis; terpenoid biosynthesis. Monoterpene synthase that catalyzes the formation of (3R)-linalool from geranyl diphosphate, but not from isopentenyl diphosphate, dimethylallyl diphosphate, chrysanthemyl diphosphate, farnesyl diphosphate, (+)-copalyl diphosphate or geranylgeranyl diphosphate. The polypeptide is R-linalool synthase QH1, chloroplastic (QH1) (Artemisia annua (Sweet wormwood)).